Consider the following 372-residue polypeptide: Alanine racemase (372 aa).

Lysine 48 serves as the catalytic Proton acceptor; specific for D-alanine. An N6-(pyridoxal phosphate)lysine modification is found at lysine 48. Substrate is bound at residue arginine 143. Tyrosine 268 serves as the catalytic Proton acceptor; specific for L-alanine. A substrate-binding site is contributed by methionine 316.

Belongs to the alanine racemase family. Pyridoxal 5'-phosphate serves as cofactor.

It catalyses the reaction L-alanine = D-alanine. The protein operates within amino-acid biosynthesis; D-alanine biosynthesis; D-alanine from L-alanine: step 1/1. Functionally, catalyzes the interconversion of L-alanine and D-alanine. May also act on other amino acids. The chain is Alanine racemase (alr) from Vibrio vulnificus (strain YJ016).